A 132-amino-acid chain; its full sequence is ATP synthase epsilon chain 1 (132 aa).

Belongs to the ATPase epsilon chain family. F-type ATPases have 2 components, CF(1) - the catalytic core - and CF(0) - the membrane proton channel. CF(1) has five subunits: alpha(3), beta(3), gamma(1), delta(1), epsilon(1). CF(0) has three main subunits: a, b and c.

The protein resides in the cell inner membrane. Produces ATP from ADP in the presence of a proton gradient across the membrane. This is ATP synthase epsilon chain 1 from Cereibacter sphaeroides (strain ATCC 17023 / DSM 158 / JCM 6121 / CCUG 31486 / LMG 2827 / NBRC 12203 / NCIMB 8253 / ATH 2.4.1.) (Rhodobacter sphaeroides).